A 1187-amino-acid polypeptide reads, in one-letter code: Trafficking protein particle complex II-specific subunit 120 homolog (1187 aa).

Residues 1037 to 1059 form a disordered region; it reads GTTAKTDSSKEPGDGSSRSADES.

This sequence belongs to the TRS120 family. Part of the multisubunit TRAPP (transport protein particle) II complex composed of BET3, BET5, TRS20, TRS23, TRS31, TRS33, TRS65, TRS85, TRS120 and TRS130.

It localises to the golgi apparatus. It is found in the trans-Golgi network. The protein resides in the early endosome. Its function is as follows. Specific subunit of the TRAPP II complex, a highly conserved vesicle tethering complex that is required for the proper transport of proteins in post-Golgi trafficking pathways to the growing cell plate in mitotic active cells. In Oryza sativa subsp. japonica (Rice), this protein is Trafficking protein particle complex II-specific subunit 120 homolog.